We begin with the raw amino-acid sequence, 168 residues long: G/U mismatch-specific DNA glycosylase (168 aa).

It belongs to the uracil-DNA glycosylase (UDG) superfamily. TDG/mug family. In terms of assembly, binds DNA as a monomer.

Its subcellular location is the cytoplasm. The enzyme catalyses Specifically hydrolyzes mismatched double-stranded DNA and polynucleotides, releasing free uracil.. Excises ethenocytosine and uracil, which can arise by alkylation or deamination of cytosine, respectively, from the corresponding mispairs with guanine in ds-DNA. It is capable of hydrolyzing the carbon-nitrogen bond between the sugar-phosphate backbone of the DNA and the mispaired base. The complementary strand guanine functions in substrate recognition. Required for DNA damage lesion repair in stationary-phase cells. The polypeptide is G/U mismatch-specific DNA glycosylase (Escherichia coli O157:H7 (strain EC4115 / EHEC)).